Consider the following 328-residue polypeptide: dTDP-3,4-didehydro-2,6-dideoxy-alpha-D-glucose 3-reductase (328 aa).

R20 is a substrate binding site. Residues 38–39 (SR), L75, and H80 each bind NADP(+). K98 functions as the Proton donor in the catalytic mechanism. R166 and D178 together coordinate NADP(+). Substrate contacts are provided by Y236 and T256.

Belongs to the Gfo/Idh/MocA family.

The enzyme catalyses dTDP-4-dehydro-2,6-dideoxy-alpha-D-glucose + NADP(+) = dTDP-3,4-didehydro-2,6-dideoxy-alpha-D-glucose + NADPH + H(+). It participates in antibiotic biosynthesis. Its function is as follows. Involved in the biosynthesis of one of the two 2,6-deoxysugars, dTDP-L-oleandrose, attached to the macrolactone ring oleandolide to produce the aglycone antibiotic oleandomycin. Catalyzes the reduction of the C-3 keto moiety of dTDP-3,4-diketo-2,6-dideoxy-alpha-D-glucose to yield dTDP-4-keto-2,6-dideoxy-alpha-D-glucose. NADPH is the better reductant, however NADH can also be used. The polypeptide is dTDP-3,4-didehydro-2,6-dideoxy-alpha-D-glucose 3-reductase (Streptomyces antibioticus).